The primary structure comprises 271 residues: Phospholipid scramblase family member 5 (271 aa).

A compositionally biased stretch (polar residues) spans methionine 1–arginine 10. Positions methionine 1–proline 33 are disordered. The interval methionine 1–proline 45 is proline-rich domain (PRD).

The protein belongs to the phospholipid scramblase family.

The protein is Phospholipid scramblase family member 5 (PLSCR5) of Homo sapiens (Human).